The following is a 119-amino-acid chain: Ribonuclease P protein component (119 aa).

Belongs to the RnpA family. Consists of a catalytic RNA component (M1 or rnpB) and a protein subunit.

It catalyses the reaction Endonucleolytic cleavage of RNA, removing 5'-extranucleotides from tRNA precursor.. RNaseP catalyzes the removal of the 5'-leader sequence from pre-tRNA to produce the mature 5'-terminus. It can also cleave other RNA substrates such as 4.5S RNA. The protein component plays an auxiliary but essential role in vivo by binding to the 5'-leader sequence and broadening the substrate specificity of the ribozyme. The polypeptide is Ribonuclease P protein component (Bacillus cereus (strain ATCC 14579 / DSM 31 / CCUG 7414 / JCM 2152 / NBRC 15305 / NCIMB 9373 / NCTC 2599 / NRRL B-3711)).